Reading from the N-terminus, the 128-residue chain is Sulfurtransferase TusD (128 aa).

The active-site Cysteine persulfide intermediate is cysteine 78.

The protein belongs to the DsrE/TusD family. Heterohexamer, formed by a dimer of trimers. The hexameric TusBCD complex contains 2 copies each of TusB, TusC and TusD. The TusBCD complex interacts with TusE.

Its subcellular location is the cytoplasm. Functionally, part of a sulfur-relay system required for 2-thiolation of 5-methylaminomethyl-2-thiouridine (mnm(5)s(2)U) at tRNA wobble positions. Accepts sulfur from TusA and transfers it in turn to TusE. This Escherichia fergusonii (strain ATCC 35469 / DSM 13698 / CCUG 18766 / IAM 14443 / JCM 21226 / LMG 7866 / NBRC 102419 / NCTC 12128 / CDC 0568-73) protein is Sulfurtransferase TusD.